Here is a 161-residue protein sequence, read N- to C-terminus: Ribonuclease P protein component (161 aa).

The tract at residues 1–20 is disordered; the sequence is MPDELRAEKSFPSKPYDSLK.

This sequence belongs to the RnpA family. Consists of a catalytic RNA component (M1 or rnpB) and a protein subunit.

It carries out the reaction Endonucleolytic cleavage of RNA, removing 5'-extranucleotides from tRNA precursor.. RNaseP catalyzes the removal of the 5'-leader sequence from pre-tRNA to produce the mature 5'-terminus. It can also cleave other RNA substrates such as 4.5S RNA. The protein component plays an auxiliary but essential role in vivo by binding to the 5'-leader sequence and broadening the substrate specificity of the ribozyme. The polypeptide is Ribonuclease P protein component (Helicobacter pylori (strain P12)).